The primary structure comprises 1770 residues: Transposon Ty2-DR2 Gag-Pol polyprotein (1770 aa).

Composition is skewed to polar residues over residues 1-39 and 49-60; these read MESQQLHQNPHSQHGSAYASVTSKEVPSNQDPLAVSASN and KVNSQEETTPGT. 2 disordered regions span residues 1 to 89 and 360 to 449; these read MESQ…QQHG and HSEY…SNDE. The interval 295–397 is RNA-binding; it reads ENNINVSDRL…SSKPRAAKAH (103 aa). Low complexity predominate over residues 369-381; the sequence is TSPNTTNTKVTTR. Polar residues-rich tracts occupy residues 399–408 and 415–435; these read IATSSKFSRV and ESTVSSQYLSDDNELSLGQQQ. Asp457 acts as the For protease activity; shared with dimeric partner in catalysis. The interval 579 to 636 is integrase-type zinc finger-like; it reads NVNKSKSVNKYPYPLIHRMLGHANFRSIQKSLKKNAVTYLKESDIEWSNASTYQCPDC. The Integrase catalytic domain maps to 656–831; sequence ESYEPFQYLH…AGLDITTILP (176 aa). Asp667 and Asp732 together coordinate Mg(2+). Disordered stretches follow at residues 1005 to 1038, 1059 to 1135, and 1171 to 1222; these read GGTIESDTTSPRHSSTFTARNQKRPGSPNDMIDL, TEEP…KSSK, and SRQT…LEPP. 2 stretches are compositionally biased toward polar residues: residues 1009 to 1024 and 1065 to 1082; these read ESDTTSPRHSSTFTAR and QRNSDTNIKYRTTNSTPS. Residues 1193-1227 carry the Bipartite nuclear localization signal motif; the sequence is KKRSLEDNETEIEVSRDTWNNKNMRSLEPPRSKKR. The Reverse transcriptase Ty1/copia-type domain occupies 1353 to 1491; it reads NDYYITQLDI…DILGLEIKYQ (139 aa). The Mg(2+) site is built by Asp1361, Asp1442, Asp1443, Asp1625, Glu1667, and Asp1700. Residues 1625–1767 form the RNase H Ty1/copia-type domain; it reads DASYGNQPYY…IKTFKLLTNK (143 aa).

In terms of assembly, the capsid protein forms a homotrimer, from which the VLPs are assembled. The protease is a homodimer, whose active site consists of two apposed aspartic acid residues. Initially, virus-like particles (VLPs) are composed of the structural unprocessed proteins Gag and Gag-Pol, and also contain the host initiator methionine tRNA (tRNA(i)-Met) which serves as a primer for minus-strand DNA synthesis, and a dimer of genomic Ty RNA. Processing of the polyproteins occurs within the particle and proceeds by an ordered pathway, called maturation. First, the protease (PR) is released by autocatalytic cleavage of the Gag-Pol polyprotein, and this cleavage is a prerequisite for subsequent processing at the remaining sites to release the mature structural and catalytic proteins. Maturation takes place prior to the RT reaction and is required to produce transposition-competent VLPs.

The protein resides in the cytoplasm. It is found in the nucleus. The enzyme catalyses DNA(n) + a 2'-deoxyribonucleoside 5'-triphosphate = DNA(n+1) + diphosphate. It catalyses the reaction Endonucleolytic cleavage to 5'-phosphomonoester.. Its function is as follows. Capsid protein (CA) is the structural component of the virus-like particle (VLP), forming the shell that encapsulates the retrotransposons dimeric RNA genome. The particles are assembled from trimer-clustered units and there are holes in the capsid shells that allow for the diffusion of macromolecules. CA also has nucleocapsid-like chaperone activity, promoting primer tRNA(i)-Met annealing to the multipartite primer-binding site (PBS), dimerization of Ty2 RNA and initiation of reverse transcription. In terms of biological role, the aspartyl protease (PR) mediates the proteolytic cleavages of the Gag and Gag-Pol polyproteins after assembly of the VLP. Functionally, reverse transcriptase/ribonuclease H (RT) is a multifunctional enzyme that catalyzes the conversion of the retro-elements RNA genome into dsDNA within the VLP. The enzyme displays a DNA polymerase activity that can copy either DNA or RNA templates, and a ribonuclease H (RNase H) activity that cleaves the RNA strand of RNA-DNA heteroduplexes during plus-strand synthesis and hydrolyzes RNA primers. The conversion leads to a linear dsDNA copy of the retrotransposon that includes long terminal repeats (LTRs) at both ends. Integrase (IN) targets the VLP to the nucleus, where a subparticle preintegration complex (PIC) containing at least integrase and the newly synthesized dsDNA copy of the retrotransposon must transit the nuclear membrane. Once in the nucleus, integrase performs the integration of the dsDNA into the host genome. The polypeptide is Transposon Ty2-DR2 Gag-Pol polyprotein (TY2B-DR2) (Saccharomyces cerevisiae (strain ATCC 204508 / S288c) (Baker's yeast)).